Consider the following 138-residue polypeptide: Lutropin subunit beta (138 aa).

Residues 1–19 form the signal peptide; the sequence is RYQELTVLLLLLLEGGSWG. Disulfide bonds link Cys27-Cys75, Cys41-Cys90, Cys44-Cys128, Cys52-Cys106, Cys56-Cys108, and Cys111-Cys118. Asn31 is a glycosylation site (N-linked (GlcNAc...) asparagine).

It belongs to the glycoprotein hormones subunit beta family. As to quaternary structure, heterodimer of a common alpha chain and a unique beta chain which confers biological specificity to thyrotropin, lutropin, follitropin and gonadotropin.

It is found in the secreted. In terms of biological role, promotes spermatogenesis and ovulation by stimulating the testes and ovaries to synthesize steroids. The protein is Lutropin subunit beta (LHB) of Osphranter rufus (Red kangaroo).